The chain runs to 372 residues: Protein-glutamate methylesterase/protein-glutamine glutaminase 1 (372 aa).

Positions 4–121 (KVLVVDDSSF…ATNKDDAILL (118 aa)) constitute a Response regulatory domain. D55 is subject to 4-aspartylphosphate. The disordered stretch occupies residues 138 to 174 (VVRPTTPTPPPRSSASSVLGGVSTHTQPAPVRSSHAA). The 194-residue stretch at 179-372 (SGKQYKLLLI…ESILKESARG (194 aa)) folds into the CheB-type methylesterase domain. Catalysis depends on residues S191, H218, and D314.

This sequence belongs to the CheB family. In terms of processing, phosphorylated by CheA. Phosphorylation of the N-terminal regulatory domain activates the methylesterase activity.

Its subcellular location is the cytoplasm. The catalysed reaction is [protein]-L-glutamate 5-O-methyl ester + H2O = L-glutamyl-[protein] + methanol + H(+). It catalyses the reaction L-glutaminyl-[protein] + H2O = L-glutamyl-[protein] + NH4(+). Functionally, involved in chemotaxis. Part of a chemotaxis signal transduction system that modulates chemotaxis in response to various stimuli. Catalyzes the demethylation of specific methylglutamate residues introduced into the chemoreceptors (methyl-accepting chemotaxis proteins or MCP) by CheR. Also mediates the irreversible deamidation of specific glutamine residues to glutamic acid. The sequence is that of Protein-glutamate methylesterase/protein-glutamine glutaminase 1 from Shewanella sp. (strain MR-4).